We begin with the raw amino-acid sequence, 563 residues long: Arginine--tRNA ligase (563 aa).

Positions 134–144 (ANPTGLLHMGN) match the 'HIGH' region motif.

Belongs to the class-I aminoacyl-tRNA synthetase family. Monomer.

It is found in the cytoplasm. It carries out the reaction tRNA(Arg) + L-arginine + ATP = L-arginyl-tRNA(Arg) + AMP + diphosphate. This Heliobacterium modesticaldum (strain ATCC 51547 / Ice1) protein is Arginine--tRNA ligase.